The sequence spans 577 residues: Proline--tRNA ligase (577 aa).

This sequence belongs to the class-II aminoacyl-tRNA synthetase family. ProS type 1 subfamily. As to quaternary structure, homodimer.

The protein localises to the cytoplasm. It catalyses the reaction tRNA(Pro) + L-proline + ATP = L-prolyl-tRNA(Pro) + AMP + diphosphate. Functionally, catalyzes the attachment of proline to tRNA(Pro) in a two-step reaction: proline is first activated by ATP to form Pro-AMP and then transferred to the acceptor end of tRNA(Pro). As ProRS can inadvertently accommodate and process non-cognate amino acids such as alanine and cysteine, to avoid such errors it has two additional distinct editing activities against alanine. One activity is designated as 'pretransfer' editing and involves the tRNA(Pro)-independent hydrolysis of activated Ala-AMP. The other activity is designated 'posttransfer' editing and involves deacylation of mischarged Ala-tRNA(Pro). The misacylated Cys-tRNA(Pro) is not edited by ProRS. This chain is Proline--tRNA ligase, found in Chlamydia felis (strain Fe/C-56) (Chlamydophila felis).